Consider the following 1106-residue polypeptide: Zinc finger protein GLI1 (1106 aa).

The segment at 1-20 (MFNSMTPPPISSYGEPCCLR) is SNAG domain. The interaction with SUFU stretch occupies residues 120–124 (SYGHL). 5 consecutive C2H2-type zinc fingers follow at residues 235–260 (TDCR…NSEH), 268–295 (FVCH…MRRH), 301–325 (HKCT…LRSH), 331–356 (YMCE…NRTH), and 362–387 (YVCK…KTVH). The segment at 283 to 291 (KAQYMLVVH) is interaction with DNA. Interaction with DNA stretches follow at residues 345–350 (ASDRAK) and 375–381 (DPSSLRK). Disordered stretches follow at residues 375–485 (DPSS…DEGP), 516–580 (GLKL…SLPG), 732–792 (YGGP…LYPG), 817–889 (EQGC…PTHS), and 914–942 (GRED…SRAK). The segment covering 413–428 (EPKREREGGPIREESR) has biased composition (basic and acidic residues). Over residues 442–463 (PGAQSSCSSDHSPAGSAANTDS) the composition is skewed to polar residues. Lysine 518 carries the post-translational modification N6-acetyllysine. Low complexity-rich tracts occupy residues 544–560 (SSSS…RRSS) and 737–753 (GAAA…SLPL). Positions 754–766 (GPGPPTNYGPNPC) are enriched in pro residues. Residues 768 to 779 (QQASYPDPTQET) show a composition bias toward polar residues. Lysine 1003 participates in a covalent cross-link: Glycyl lysine isopeptide (Lys-Gly) (interchain with G-Cter in SUMO2). Positions 1054–1087 (DEPQGLSPPPSHDQRGSSGHTPPPSGPPNMAVGN) are disordered.

The protein belongs to the GLI C2H2-type zinc-finger protein family. Interacts with KIF7. Interacts with STK36. Interacts with ZIC1; the interaction enhances transcription activation. Interacts with SUFU; this inhibits transcriptional activation by GLI1. Phosphorylated in vitro by ULK3. Post-translationally, acetylation at Lys-518 down-regulates transcriptional activity. Deacetylated by HDAC1. In terms of processing, ubiquitinated by the CRL2(FEM1B) complex, suppressing GLI1 transcriptional activator activity. Detected in testis (at protein level). Testis, myometrium and fallopian tube. Also expressed in the brain with highest expression in the cerebellum, optic nerve and olfactory tract. Isoform 1 is detected in brain, spleen, pancreas, liver, kidney and placenta; isoform 2 is not detectable in these tissues.

It localises to the cytoplasm. The protein resides in the nucleus. Acts as a transcriptional activator. Binds to the DNA consensus sequence 5'-GACCACCCA-3'. Regulates the transcription of specific genes during normal development. Plays a role in craniofacial development and digital development, as well as development of the central nervous system and gastrointestinal tract. Mediates SHH signaling. Plays a role in cell proliferation and differentiation via its role in SHH signaling. Functionally, acts as a transcriptional activator, but activates a different set of genes than isoform 1. Activates expression of CD24, unlike isoform 1. Mediates SHH signaling. Promotes cancer cell migration. This chain is Zinc finger protein GLI1 (GLI1), found in Homo sapiens (Human).